The primary structure comprises 391 residues: 8-amino-7-oxononanoate synthase (391 aa).

Arginine 19 lines the substrate pocket. Residue 106 to 107 coordinates pyridoxal 5'-phosphate; that stretch reads GY. Histidine 131 contributes to the substrate binding site. Residues serine 178, histidine 206, and threonine 234 each coordinate pyridoxal 5'-phosphate. Position 237 is an N6-(pyridoxal phosphate)lysine (lysine 237). Threonine 353 is a substrate binding site.

It belongs to the class-II pyridoxal-phosphate-dependent aminotransferase family. BioF subfamily. Homodimer. Pyridoxal 5'-phosphate is required as a cofactor.

It catalyses the reaction 6-carboxyhexanoyl-[ACP] + L-alanine + H(+) = (8S)-8-amino-7-oxononanoate + holo-[ACP] + CO2. Its pathway is cofactor biosynthesis; biotin biosynthesis. In terms of biological role, catalyzes the decarboxylative condensation of pimeloyl-[acyl-carrier protein] and L-alanine to produce 8-amino-7-oxononanoate (AON), [acyl-carrier protein], and carbon dioxide. This chain is 8-amino-7-oxononanoate synthase, found in Geobacter sulfurreducens (strain ATCC 51573 / DSM 12127 / PCA).